A 395-amino-acid chain; its full sequence is DNA primase small subunit PriS (395 aa).

Catalysis depends on residues D95, D97, and D302.

It belongs to the eukaryotic-type primase small subunit family. As to quaternary structure, heterodimer of a small subunit (PriS) and a large subunit (PriL). It depends on Mg(2+) as a cofactor. Requires Mn(2+) as cofactor.

Catalytic subunit of DNA primase, an RNA polymerase that catalyzes the synthesis of short RNA molecules used as primers for DNA polymerase during DNA replication. The small subunit contains the primase catalytic core and has DNA synthesis activity on its own. Binding to the large subunit stabilizes and modulates the activity, increasing the rate of DNA synthesis while decreasing the length of the DNA fragments, and conferring RNA synthesis capability. The DNA polymerase activity may enable DNA primase to also catalyze primer extension after primer synthesis. May also play a role in DNA repair. In Methanothrix thermoacetophila (strain DSM 6194 / JCM 14653 / NBRC 101360 / PT) (Methanosaeta thermophila), this protein is DNA primase small subunit PriS.